The chain runs to 601 residues: Glutathione-regulated potassium-efflux system protein KefB (601 aa).

13 consecutive transmembrane segments (helical) span residues 4 to 24, 29 to 49, 55 to 75, 87 to 107, 115 to 135, 152 to 172, 177 to 197, 207 to 227, 230 to 250, 262 to 282, 284 to 304, 324 to 344, and 356 to 376; these read SDFLLAGVLFLFAAVAAVPLA, IGAVLGYLLAGIAIGPWGLGF, EILHFSELGVVFLMFIIGLEL, IFGVGAAQVLLSAALLAGLLM, AAVVGGIGLAMSSTAMALQLM, VLLFQDLAVIPALALVPLLAG, HFDWMKIGMKVLAFVGMLIGG, FIAASGVREVFTAATLLLVLG, LFMDALGLSMALGTFIAGVLL, AIDPFKGLLLGLFFISVGMSL, LGVLYIHLLWVVISVVVLVAV, MQFAGVLSQGGEFAFVLFSTA, and ALLLVTVTLSMMTTPLLMKLV. Positions 400–519 constitute an RCK N-terminal domain; the sequence is KPQVIVVGFG…AGVTQFSRET (120 aa).

It belongs to the monovalent cation:proton antiporter 2 (CPA2) transporter (TC 2.A.37) family. KefB subfamily. Interacts with the regulatory subunit KefG.

Its subcellular location is the cell inner membrane. In terms of biological role, pore-forming subunit of a potassium efflux system that confers protection against electrophiles. Catalyzes K(+)/H(+) antiport. This Shigella boydii serotype 18 (strain CDC 3083-94 / BS512) protein is Glutathione-regulated potassium-efflux system protein KefB.